A 1096-amino-acid polypeptide reads, in one-letter code: Mediator of replication checkpoint protein 1 (1096 aa).

Over residues 68–85 the composition is skewed to basic and acidic residues; that stretch reads EGKKAPEQNHNNGKDRSE. The interval 68-90 is disordered; it reads EGKKAPEQNHNNGKDRSENSLPT. A Phosphoserine modification is found at Ser144. 3 disordered regions span residues 166–200, 294–316, and 336–365; these read ALKT…IEPQ, IQSE…YKKP, and DDSS…LHEN. Positions 181–200 are enriched in polar residues; the sequence is RIDSSGATSQTQPIKSIEPQ. Basic and acidic residues predominate over residues 294 to 315; that stretch reads IQSELASEDSKREKARNVEYKK. Positions 336–346 are enriched in acidic residues; sequence DDSSSNEDDDI. A phosphoserine mark is found at Ser409, Ser411, and Ser434. Residues 488–542 are a coiled coil; sequence QKEVIETKGLKLEDMAKEKEIVENLLEQEILRNKRIRQKEKRREKLEENDFQLNA. The tract at residues 527-620 is disordered; that stretch reads EKRREKLEEN…VEAKPKEKAD (94 aa). Low complexity predominate over residues 547 to 560; that stretch reads SDSGSESSGFALSG. The span at 591 to 600 shows a compositional bias: basic residues; that stretch reads KQKKSHHVKH. Ser605 and Ser607 each carry phosphoserine. Thr609 is subject to Phosphothreonine. The span at 611-620 shows a compositional bias: basic and acidic residues; it reads VEAKPKEKAD. Residues 652 to 716 are a coiled coil; sequence DTQNIEEVMA…IKELKKRGVT (65 aa). The interval 724-743 is disordered; the sequence is EESEDEWHGIGGADGEGSDD. A phosphoserine mark is found at Ser801 and Ser807. The span at 881 to 898 shows a compositional bias: polar residues; the sequence is DTQDNSINVGDNTGNNEQ. Residues 881–903 form a disordered region; the sequence is DTQDNSINVGDNTGNNEQKPVDQ. Position 911 is a phosphoserine (Ser911). The disordered stretch occupies residues 1058-1096; that stretch reads RKTEGSHRYHHDHHNKKMKMKTKTKSNKLFESGQDSFDN. Residues 1065 to 1083 are compositionally biased toward basic residues; the sequence is RYHHDHHNKKMKMKTKTKS.

As to quaternary structure, interacts with CDC45 in S phase. In terms of processing, phosphorylated by MEC1 and RAD53.

The protein resides in the nucleus. Functionally, required for normal DNA replication. Phosphorylated in response to DNA replication stress. Phosphorylation allows it to mediate the activation of RAD53. The sequence is that of Mediator of replication checkpoint protein 1 (MRC1) from Saccharomyces cerevisiae (strain ATCC 204508 / S288c) (Baker's yeast).